The following is a 292-amino-acid chain: Phosphotriesterase homology protein (292 aa).

Positions 12, 14, and 125 each coordinate Zn(2+). 148 to 149 (HN) provides a ligand contact to beta-D-glucose. Histidine 158 serves as a coordination point for Zn(2+). Residues glycine 176, aspartate 178, and arginine 181 each contribute to the beta-D-glucose site. Zn(2+) contacts are provided by histidine 186 and aspartate 243. The beta-D-glucose site is built by aspartate 280 and arginine 284.

The protein belongs to the metallo-dependent hydrolases superfamily. Phosphotriesterase family. Monomer. It depends on Zn(2+) as a cofactor.

Activity is higher in the enzyme containing Mn(2+) than that containing Zn(2+). Functionally, catalyzes the hydrolysis of phosphorylated glyceryl acetates in which the presence of a phosphate group is required for the enzymatic hydrolysis. Hydrolyzes a dibutyl glycerol derivative suggesting it acts on phosphoglycerol substrates with a butyrate leaving group. Also active with aromatic acetates and propionates. No activity with various sugar phosphates, with various nitrophenylphosphate or nitrophenylphosphonate derivatives, or with phosphorylated or non-phosphorylated sugar lactones tested. Does not hydrolyze non-phosphorylated carboxyesters with long chain leaving groups. No general esterase, aminopeptidase, sulfatase, phosphatase, carbonic anhydrase, phosphodiesterase, and phosphotriesterase activities detected when tested with the following non-specific substrates: p-nitrophenyl acetate, L-alanine nitroanilide, p-nitrophenyl sulfate, bis(p-nitrophenyl) phosphate, paraoxon, and p-nitrophenyl phosphate. The chain is Phosphotriesterase homology protein from Escherichia coli (strain K12).